An 874-amino-acid chain; its full sequence is Alanine--tRNA ligase (874 aa).

H562, H566, C665, and H669 together coordinate Zn(2+).

It belongs to the class-II aminoacyl-tRNA synthetase family. Zn(2+) serves as cofactor.

Its subcellular location is the cytoplasm. The catalysed reaction is tRNA(Ala) + L-alanine + ATP = L-alanyl-tRNA(Ala) + AMP + diphosphate. In terms of biological role, catalyzes the attachment of alanine to tRNA(Ala) in a two-step reaction: alanine is first activated by ATP to form Ala-AMP and then transferred to the acceptor end of tRNA(Ala). Also edits incorrectly charged Ser-tRNA(Ala) and Gly-tRNA(Ala) via its editing domain. This chain is Alanine--tRNA ligase, found in Pseudomonas fluorescens (strain Pf0-1).